Consider the following 413-residue polypeptide: 2,3-bisphosphoglycerate-independent phosphoglycerate mutase (413 aa).

This sequence belongs to the BPG-independent phosphoglycerate mutase family. A-PGAM subfamily.

The catalysed reaction is (2R)-2-phosphoglycerate = (2R)-3-phosphoglycerate. The protein operates within carbohydrate degradation; glycolysis; pyruvate from D-glyceraldehyde 3-phosphate: step 3/5. Catalyzes the interconversion of 2-phosphoglycerate and 3-phosphoglycerate. The chain is 2,3-bisphosphoglycerate-independent phosphoglycerate mutase from Sulfolobus acidocaldarius (strain ATCC 33909 / DSM 639 / JCM 8929 / NBRC 15157 / NCIMB 11770).